The following is a 720-amino-acid chain: Engulfment and cell motility protein 3 (720 aa).

The 173-residue stretch at 307-479 (EQREQLQVLR…VVREQLARTL (173 aa)) folds into the ELMO domain. In terms of domain architecture, PH spans 542-664 (RLCEGTLFRK…TDGLSALLGS (123 aa)). The SH3-binding signature appears at 696–706 (PERPPPVPPPP).

In terms of assembly, probably interacts directly with the SH3-domain of DOCK1 via its SH3-binding site. Part of a complex with DOCK1 and RAC1. Interacts with ADGRB3.

The protein localises to the cytoplasm. Involved in cytoskeletal rearrangements required for phagocytosis of apoptotic cells and cell motility. Acts in association with DOCK1 and CRK. Was initially proposed to be required in complex with DOCK1 to activate Rac Rho small GTPases. May enhance the guanine nucleotide exchange factor (GEF) activity of DOCK1. The polypeptide is Engulfment and cell motility protein 3 (ELMO3) (Homo sapiens (Human)).